Reading from the N-terminus, the 125-residue chain is Photosystem II extrinsic protein U (125 aa).

The N-terminal stretch at 1–29 (MKRLLSWLTGLVVIAGLLIGLLVPPSVSA) is a signal peptide.

The protein belongs to the PsbU family. PSII is composed of 1 copy each of membrane proteins PsbA, PsbB, PsbC, PsbD, PsbE, PsbF, PsbH, PsbI, PsbJ, PsbK, PsbL, PsbM, PsbT, PsbX, PsbY, PsbZ, Psb30/Ycf12, peripheral proteins PsbO, CyanoQ (PsbQ), PsbU, PsbV and a large number of cofactors. It forms dimeric complexes.

The protein resides in the cellular thylakoid membrane. Functionally, one of the extrinsic, lumenal subunits of photosystem II (PSII). PSII is a light-driven water plastoquinone oxidoreductase, using light energy to abstract electrons from H(2)O, generating a proton gradient subsequently used for ATP formation. The extrinsic proteins stabilize the structure of photosystem II oxygen-evolving complex (OEC), the ion environment of oxygen evolution and protect the OEC against heat-induced inactivation. This is Photosystem II extrinsic protein U from Synechococcus sp. (strain CC9311).